The sequence spans 379 residues: Quinolinate synthase (379 aa).

The iminosuccinate site is built by H60 and S81. C126 serves as a coordination point for [4Fe-4S] cluster. Iminosuccinate is bound by residues 152–154 (YAN) and S169. Residue C213 coordinates [4Fe-4S] cluster. Iminosuccinate-binding positions include 239-241 (HPE) and T256. C310 contributes to the [4Fe-4S] cluster binding site.

It belongs to the quinolinate synthase family. Type 1 subfamily. [4Fe-4S] cluster serves as cofactor.

Its subcellular location is the cytoplasm. The catalysed reaction is iminosuccinate + dihydroxyacetone phosphate = quinolinate + phosphate + 2 H2O + H(+). It participates in cofactor biosynthesis; NAD(+) biosynthesis; quinolinate from iminoaspartate: step 1/1. Functionally, catalyzes the condensation of iminoaspartate with dihydroxyacetone phosphate to form quinolinate. This Herminiimonas arsenicoxydans protein is Quinolinate synthase.